Here is a 249-residue protein sequence, read N- to C-terminus: 2,3-bisphosphoglycerate-dependent phosphoglycerate mutase (249 aa).

Residues 8–15, 21–22, R60, 87–90, K98, 114–115, and 183–184 contribute to the substrate site; these read RHGESTWN, TG, ERHY, RR, and GN. The active-site Tele-phosphohistidine intermediate is the H9. The active-site Proton donor/acceptor is E87.

The protein belongs to the phosphoglycerate mutase family. BPG-dependent PGAM subfamily. In terms of assembly, homodimer.

The enzyme catalyses (2R)-2-phosphoglycerate = (2R)-3-phosphoglycerate. It participates in carbohydrate degradation; glycolysis; pyruvate from D-glyceraldehyde 3-phosphate: step 3/5. Its function is as follows. Catalyzes the interconversion of 2-phosphoglycerate and 3-phosphoglycerate. This is 2,3-bisphosphoglycerate-dependent phosphoglycerate mutase from Azoarcus sp. (strain BH72).